The sequence spans 158 residues: Cyclic pyranopterin monophosphate synthase (158 aa).

Substrate contacts are provided by residues Met74–His76 and Met112–Glu113. Residue Asp127 is part of the active site.

Belongs to the MoaC family. Homohexamer; trimer of dimers.

It carries out the reaction (8S)-3',8-cyclo-7,8-dihydroguanosine 5'-triphosphate = cyclic pyranopterin phosphate + diphosphate. Its pathway is cofactor biosynthesis; molybdopterin biosynthesis. Functionally, catalyzes the conversion of (8S)-3',8-cyclo-7,8-dihydroguanosine 5'-triphosphate to cyclic pyranopterin monophosphate (cPMP). The protein is Cyclic pyranopterin monophosphate synthase of Helicobacter pylori (strain Shi470).